Reading from the N-terminus, the 169-residue chain is Small ribosomal subunit protein uS5 (169 aa).

Residues 14-77 (LDDQVVAINR…AAAEKNLITV (64 aa)) form the S5 DRBM domain.

Belongs to the universal ribosomal protein uS5 family. In terms of assembly, part of the 30S ribosomal subunit. Contacts proteins S4 and S8.

Its function is as follows. With S4 and S12 plays an important role in translational accuracy. Functionally, located at the back of the 30S subunit body where it stabilizes the conformation of the head with respect to the body. This is Small ribosomal subunit protein uS5 from Limosilactobacillus reuteri (strain DSM 20016) (Lactobacillus reuteri).